A 4753-amino-acid chain; its full sequence is Dynein heavy chain domain-containing protein 1 (4753 aa).

2 coiled-coil regions span residues 826–858 and 936–991; these read IHAI…ALHE and KLQQ…LSEL. Residues 2688–2766 form a disordered region; it reads HLGKDHQESE…SRGMKESISH (79 aa). Positions 2695-2712 are enriched in acidic residues; that stretch reads ESEEEEEEERVPEVESEG. Residues 2740–2751 are compositionally biased toward polar residues; it reads RVSNSRDPSLTP. Coiled-coil stretches lie at residues 3125-3227, 3590-3651, and 4431-4460; these read LQQQ…MSKA, MRNQ…QGSK, and GAQL…LTHV. Residues 3580–3657 form a disordered region; it reads ALTEGRGKGL…QGSKPAYETQ (78 aa). Positions 3602–3615 are enriched in acidic residues; sequence KEEDDESEESNEAE. The span at 3616–3631 shows a compositional bias: basic and acidic residues; that stretch reads DQTKEQKAEERKNEQE. The span at 3632–3641 shows a compositional bias: acidic residues; that stretch reads KEQEENEEKE. The interval 4669–4697 is disordered; that stretch reads ALQDSPSSQPSPLPPVSISTQAPGTSDLP.

The protein belongs to the dynein heavy chain family. In terms of tissue distribution, expressed in spermatozoa (at protein level).

The protein localises to the cell projection. The protein resides in the cilium. Its subcellular location is the flagellum. In terms of biological role, essential for the normal assembly and function of sperm flagella axonemes. The chain is Dynein heavy chain domain-containing protein 1 (DNHD1) from Homo sapiens (Human).